The sequence spans 353 residues: Diacetylchitobiose uptake system permease protein NgcF (353 aa).

Residues 1-24 form a disordered region; the sequence is MKDTIPTAETASRRPEPAARGGRP. 6 helical membrane passes run 36-56, 100-120, 141-161, 197-217, 254-274, and 303-323; these read FFLA…LIPF, LLAA…AVAI, IISF…WAQM, VMFV…IAAI, AYIY…AMVP, and TAMG…VFLV. In terms of domain architecture, ABC transmembrane type-1 spans 95–320; the sequence is LRNVALLAAF…AVTLVFAALV (226 aa). Residues 329 to 353 are disordered; the sequence is GGEGESKRKAPGSRARRAAAKGGAR. Residues 337–353 are compositionally biased toward basic residues; that stretch reads KAPGSRARRAAAKGGAR.

Belongs to the binding-protein-dependent transport system permease family. The complex is composed of two ATP-binding proteins (MsiK), two transmembrane proteins (NgcF and NgcG) and a solute-binding protein (NgcE).

Its subcellular location is the cell membrane. In terms of biological role, part of the ABC transporter complex NgcEFG-MsiK involved in N,N'-diacetylchitobiose ((GlcNAc)2) uptake. Responsible for the translocation of the substrate across the membrane. This is Diacetylchitobiose uptake system permease protein NgcF from Streptomyces coelicolor (strain ATCC BAA-471 / A3(2) / M145).